Here is a 169-residue protein sequence, read N- to C-terminus: Nucleoside-triphosphatase THEP1 (169 aa).

Residues 11–18 (GEPGVGKT) and 100–107 (IIGIDEIG) contribute to the ATP site.

Belongs to the THEP1 NTPase family.

The catalysed reaction is a ribonucleoside 5'-triphosphate + H2O = a ribonucleoside 5'-diphosphate + phosphate + H(+). Functionally, has nucleotide phosphatase activity towards ATP, GTP, CTP, TTP and UTP. May hydrolyze nucleoside diphosphates with lower efficiency. The chain is Nucleoside-triphosphatase THEP1 from Sulfurisphaera tokodaii (strain DSM 16993 / JCM 10545 / NBRC 100140 / 7) (Sulfolobus tokodaii).